We begin with the raw amino-acid sequence, 962 residues long: Integrator complex subunit 7 (962 aa).

Phosphoserine is present on residues S338 and S809.

Belongs to the Integrator subunit 7 family. In terms of assembly, component of the Integrator complex, composed of core subunits INTS1, INTS2, INTS3, INTS4, INTS5, INTS6, INTS7, INTS8, INTS9/RC74, INTS10, INTS11/CPSF3L, INTS12, INTS13, INTS14 and INTS15. The core complex associates with protein phosphatase 2A subunits PPP2CA and PPP2R1A, to form the Integrator-PP2A (INTAC) complex. Interacts with NABP2.

The protein resides in the nucleus. It localises to the chromosome. Its subcellular location is the cytoplasm. Component of the integrator complex, a multiprotein complex that terminates RNA polymerase II (Pol II) transcription in the promoter-proximal region of genes. The integrator complex provides a quality checkpoint during transcription elongation by driving premature transcription termination of transcripts that are unfavorably configured for transcriptional elongation: the complex terminates transcription by (1) catalyzing dephosphorylation of the C-terminal domain (CTD) of Pol II subunit POLR2A/RPB1 and SUPT5H/SPT5, (2) degrading the exiting nascent RNA transcript via endonuclease activity and (3) promoting the release of Pol II from bound DNA. The integrator complex is also involved in terminating the synthesis of non-coding Pol II transcripts, such as enhancer RNAs (eRNAs), small nuclear RNAs (snRNAs), telomerase RNAs and long non-coding RNAs (lncRNAs). May be not involved in the recruitment of cytoplasmic dynein to the nuclear envelope by different components of the INT complex. Plays a role in DNA damage response (DDR) signaling during the S phase. This Homo sapiens (Human) protein is Integrator complex subunit 7.